We begin with the raw amino-acid sequence, 588 residues long: Mediator of RNA polymerase II transcription subunit 26 (588 aa).

In terms of domain architecture, TFIIS N-terminal spans 10–87 (QMRDRLLQAI…RSWQKLIEPV (78 aa)). Disordered regions lie at residues 112-393 (RPEM…YTVN) and 412-441 (KLTF…PTEQ). Over residues 123-133 (SIHDLKNRNDI) the composition is skewed to basic and acidic residues. Over residues 179–191 (PLPTNGISGSPES) the composition is skewed to polar residues. A compositionally biased stretch (basic and acidic residues) spans 207–218 (SRLEPSDNEKHS). Pro residues predominate over residues 314–325 (SPLPLAQPPTPP). Residues Ser435 and Ser458 each carry the phosphoserine modification.

The protein belongs to the Mediator complex subunit 26 family. In terms of assembly, component of the Mediator complex, which is composed of MED1, MED4, MED6, MED7, MED8, MED9, MED10, MED11, MED12, MED13, MED13L, MED14, MED15, MED16, MED17, MED18, MED19, MED20, MED21, MED22, MED23, MED24, MED25, MED26, MED27, MED29, MED30, MED31, CCNC, CDK8 and CDC2L6/CDK11. The MED12, MED13, CCNC and CDK8 subunits form a distinct module termed the CDK8 module. Mediator containing the CDK8 module is less active than Mediator lacking this module in supporting transcriptional activation. Individual preparations of the Mediator complex lacking one or more distinct subunits have been variously termed ARC, CRSP, DRIP, PC2, SMCC and TRAP. Interacts with CEBPB (when not methylated).

The protein resides in the nucleus. Its function is as follows. Component of the Mediator complex, a coactivator involved in the regulated transcription of nearly all RNA polymerase II-dependent genes. Mediator functions as a bridge to convey information from gene-specific regulatory proteins to the basal RNA polymerase II transcription machinery. Mediator is recruited to promoters by direct interactions with regulatory proteins and serves as a scaffold for the assembly of a functional pre-initiation complex with RNA polymerase II and the general transcription factors. This chain is Mediator of RNA polymerase II transcription subunit 26 (Med26), found in Mus musculus (Mouse).